We begin with the raw amino-acid sequence, 249 residues long: GTP cyclohydrolase 1 type 2 homolog (249 aa).

A divalent metal cation is bound by residues His-64, His-65, Asp-102, His-217, and Glu-221.

Belongs to the GTP cyclohydrolase I type 2/NIF3 family. In terms of assembly, homohexamer.

The chain is GTP cyclohydrolase 1 type 2 homolog from Neisseria meningitidis serogroup A / serotype 4A (strain DSM 15465 / Z2491).